The primary structure comprises 64 residues: Large ribosomal subunit protein bL35 (64 aa).

The tract at residues 1–28 (MPKMKTHSGAKKRFKLTGSGKLKRQQAN) is disordered.

It belongs to the bacterial ribosomal protein bL35 family.

The chain is Large ribosomal subunit protein bL35 from Renibacterium salmoninarum (strain ATCC 33209 / DSM 20767 / JCM 11484 / NBRC 15589 / NCIMB 2235).